Consider the following 153-residue polypeptide: Ribosome maturation factor RimP (153 aa).

It belongs to the RimP family.

It localises to the cytoplasm. Required for maturation of 30S ribosomal subunits. This is Ribosome maturation factor RimP from Christiangramia forsetii (strain DSM 17595 / CGMCC 1.15422 / KT0803) (Gramella forsetii).